The following is a 256-amino-acid chain: Small ribosomal subunit protein uS2 (256 aa).

It belongs to the universal ribosomal protein uS2 family.

The sequence is that of Small ribosomal subunit protein uS2 from Streptococcus equi subsp. equi (strain 4047).